The sequence spans 1024 residues: Beta-galactosidase (1024 aa).

Substrate is bound by residues asparagine 103 and aspartate 202. Aspartate 202 lines the Na(+) pocket. Residues glutamate 417, histidine 419, and glutamate 462 each coordinate Mg(2+). Residues glutamate 462 and glutamate 538–histidine 541 contribute to the substrate site. Glutamate 462 (proton donor) is an active-site residue. Glutamate 538 (nucleophile) is an active-site residue. Mg(2+) is bound at residue asparagine 598. Na(+)-binding residues include phenylalanine 602 and asparagine 605. Positions 605 and 1000 each coordinate substrate.

The protein belongs to the glycosyl hydrolase 2 family. As to quaternary structure, homotetramer. The cofactor is Mg(2+). Na(+) serves as cofactor.

The enzyme catalyses Hydrolysis of terminal non-reducing beta-D-galactose residues in beta-D-galactosides.. The chain is Beta-galactosidase from Escherichia coli (strain ATCC 8739 / DSM 1576 / NBRC 3972 / NCIMB 8545 / WDCM 00012 / Crooks).